The primary structure comprises 286 residues: Ribonuclease Z (286 aa).

Zn(2+)-binding residues include histidine 61, histidine 63, aspartate 65, histidine 66, histidine 153, aspartate 176, and histidine 240. Aspartate 65 acts as the Proton acceptor in catalysis.

The protein belongs to the RNase Z family. As to quaternary structure, homodimer. The cofactor is Zn(2+).

It catalyses the reaction Endonucleolytic cleavage of RNA, removing extra 3' nucleotides from tRNA precursor, generating 3' termini of tRNAs. A 3'-hydroxy group is left at the tRNA terminus and a 5'-phosphoryl group is left at the trailer molecule.. Zinc phosphodiesterase, which displays some tRNA 3'-processing endonuclease activity. Probably involved in tRNA maturation, by removing a 3'-trailer from precursor tRNA. The sequence is that of Ribonuclease Z from Mycolicibacterium gilvum (strain PYR-GCK) (Mycobacterium gilvum (strain PYR-GCK)).